The chain runs to 399 residues: MAREKFERNKPHVNIGTIGHVDHGKTTLTAAITNVLAKKGQAQAQDYGDIDGAPEERERGITINTAHVEYETEGRHYAHVDCPGHADYVKNMITGAAQMDGAILVCAATDGPMAQTKEHILLAKQVGVPALVVALNKCDMVDDEEIIELVEMEIRELLDSYDFPGDDIPIVQVSGLKALEGDSTWESKIEELMTAVDASIPEPEREVDKPFLMAVEDVFSITGRGTVATGRIERGKVKVGEEVEIVGIRDTRLTTVTGVEMFRKLLDEGMAGDNVGLLLRGVQKEDIERGMVLVKKGSITPHTQFEGEVYVLKKEEGGRHTPFFAGYRPQFYIRTTDVTGQITAFTSDDGSNVEMVMPGDRIKMTGELICPVAIEQGMRFAIREGGRTIGAGVVSKILK.

Residues 10 to 204 (KPHVNIGTIG…AVDASIPEPE (195 aa)) enclose the tr-type G domain. The segment at 19-26 (GHVDHGKT) is G1. Residue 19–26 (GHVDHGKT) participates in GTP binding. T26 is a binding site for Mg(2+). A G2 region spans residues 60–64 (GITIN). The G3 stretch occupies residues 81–84 (DCPG). Residues 81–85 (DCPGH) and 136–139 (NKCD) each bind GTP. The G4 stretch occupies residues 136–139 (NKCD). The G5 stretch occupies residues 174–176 (SGL).

Belongs to the TRAFAC class translation factor GTPase superfamily. Classic translation factor GTPase family. EF-Tu/EF-1A subfamily. Monomer.

Its subcellular location is the cytoplasm. It catalyses the reaction GTP + H2O = GDP + phosphate + H(+). Its function is as follows. GTP hydrolase that promotes the GTP-dependent binding of aminoacyl-tRNA to the A-site of ribosomes during protein biosynthesis. The chain is Elongation factor Tu from Prochlorococcus marinus (strain MIT 9312).